The primary structure comprises 860 residues: Probable beta-glucosidase A (860 aa).

Residues 1-19 form the signal peptide; sequence MRFTSIEAVALTAVSLASA. Residues N61, N211, and N252 are each glycosylated (N-linked (GlcNAc...) asparagine). D280 is a catalytic residue. N-linked (GlcNAc...) asparagine glycans are attached at residues N315, N322, N354, N387, N442, N523, N542, N564, N658, N690, and N712.

It belongs to the glycosyl hydrolase 3 family.

The protein localises to the secreted. The enzyme catalyses Hydrolysis of terminal, non-reducing beta-D-glucosyl residues with release of beta-D-glucose.. The protein operates within glycan metabolism; cellulose degradation. In terms of biological role, beta-glucosidases are one of a number of cellulolytic enzymes involved in the degradation of cellulosic biomass. Catalyzes the last step releasing glucose from the inhibitory cellobiose. This chain is Probable beta-glucosidase A (bglA), found in Aspergillus niger (strain ATCC MYA-4892 / CBS 513.88 / FGSC A1513).